Consider the following 415-residue polypeptide: Serine hydroxymethyltransferase (415 aa).

(6S)-5,6,7,8-tetrahydrofolate is bound by residues leucine 121 and 125–127 (GHL). At lysine 230 the chain carries N6-(pyridoxal phosphate)lysine. 355-357 (SPF) contacts (6S)-5,6,7,8-tetrahydrofolate.

The protein belongs to the SHMT family. In terms of assembly, homodimer. It depends on pyridoxal 5'-phosphate as a cofactor.

It localises to the cytoplasm. It carries out the reaction (6R)-5,10-methylene-5,6,7,8-tetrahydrofolate + glycine + H2O = (6S)-5,6,7,8-tetrahydrofolate + L-serine. It functions in the pathway one-carbon metabolism; tetrahydrofolate interconversion. Its pathway is amino-acid biosynthesis; glycine biosynthesis; glycine from L-serine: step 1/1. Catalyzes the reversible interconversion of serine and glycine with tetrahydrofolate (THF) serving as the one-carbon carrier. This reaction serves as the major source of one-carbon groups required for the biosynthesis of purines, thymidylate, methionine, and other important biomolecules. Also exhibits THF-independent aldolase activity toward beta-hydroxyamino acids, producing glycine and aldehydes, via a retro-aldol mechanism. In Lactococcus lactis subsp. cremoris (strain SK11), this protein is Serine hydroxymethyltransferase.